We begin with the raw amino-acid sequence, 584 residues long: DNA ligase (584 aa).

Position 249 (E249) interacts with ATP. The active-site N6-AMP-lysine intermediate is the K251. Positions 256, 271, 301, 341, 416, and 422 each coordinate ATP.

This sequence belongs to the ATP-dependent DNA ligase family. Mg(2+) is required as a cofactor.

It catalyses the reaction ATP + (deoxyribonucleotide)n-3'-hydroxyl + 5'-phospho-(deoxyribonucleotide)m = (deoxyribonucleotide)n+m + AMP + diphosphate.. Functionally, DNA ligase that seals nicks in double-stranded DNA during DNA replication, DNA recombination and DNA repair. This chain is DNA ligase, found in Pyrobaculum arsenaticum (strain DSM 13514 / JCM 11321 / PZ6).